A 379-amino-acid polypeptide reads, in one-letter code: Protein RecA (379 aa).

Positions 1 to 14 (MSNEIKSISSSNSS) are enriched in low complexity. The interval 1-24 (MSNEIKSISSSNSSCPPNEARSGE) is disordered. 84 to 91 (GPESSGKT) is an ATP binding site.

It belongs to the RecA family.

The protein localises to the cytoplasm. Functionally, can catalyze the hydrolysis of ATP in the presence of single-stranded DNA, the ATP-dependent uptake of single-stranded DNA by duplex DNA, and the ATP-dependent hybridization of homologous single-stranded DNAs. It interacts with LexA causing its activation and leading to its autocatalytic cleavage. In Prochlorococcus marinus (strain SARG / CCMP1375 / SS120), this protein is Protein RecA.